The chain runs to 276 residues: Undecaprenyl-diphosphatase (276 aa).

5 helical membrane passes run 84–104 (YRLG…GLFF), 115–135 (LWVV…AEYV), 188–208 (FGFL…LPDA), 222–242 (QLLV…AWLL), and 250–270 (MYWF…LLAT).

The protein belongs to the UppP family.

It localises to the cell membrane. It carries out the reaction di-trans,octa-cis-undecaprenyl diphosphate + H2O = di-trans,octa-cis-undecaprenyl phosphate + phosphate + H(+). Functionally, catalyzes the dephosphorylation of undecaprenyl diphosphate (UPP). Confers resistance to bacitracin. The sequence is that of Undecaprenyl-diphosphatase from Mycobacterium bovis (strain ATCC BAA-935 / AF2122/97).